Reading from the N-terminus, the 527-residue chain is Butyrophilin subfamily 2 member A1 (527 aa).

The signal sequence occupies residues 1–28; the sequence is MESAAALHFSRPASLLLLLLSLCALVSA. One can recognise an Ig-like V-type domain in the interval 29 to 141; sequence QFIVVGPTDP…SYDEAILHLV (113 aa). The Extracellular portion of the chain corresponds to 29–248; sequence QFIVVGPTDP…SFMPSVSPCA (220 aa). 3 N-linked (GlcNAc...) asparagine glycosylation sites follow: Asn-46, Asn-114, and Asn-120. Cys-51 and Cys-125 form a disulfide bridge. A helical membrane pass occupies residues 249–269; it reads VALPIIVVILMIPIAVCIYWI. Topologically, residues 270–527 are cytoplasmic; it reads NKLQKEKKIL…LHRVGTHQSL (258 aa). The B30.2/SPRY domain maps to 310–506; it reads VKEKLQEELR…IFICPALTGA (197 aa).

This sequence belongs to the immunoglobulin superfamily. BTN/MOG family. In terms of tissue distribution, highly expressed in brain, bone marrow, small intestine, muscle, spleen and pancreas. Moderate expression was seen in lung, liver and kidney.

Its subcellular location is the membrane. The protein is Butyrophilin subfamily 2 member A1 (BTN2A1) of Homo sapiens (Human).